A 927-amino-acid chain; its full sequence is DNA mismatch repair protein MutS (927 aa).

The tract at residues 44–80 (DESLKRPRNRHKPTSVPSIPLDSESQEQLETADNDND) is disordered. The span at 67–79 (ESQEQLETADNDN) shows a compositional bias: acidic residues. Residue 725 to 732 (GPNASGKS) coordinates ATP.

Belongs to the DNA mismatch repair MutS family.

Its function is as follows. This protein is involved in the repair of mismatches in DNA. It is possible that it carries out the mismatch recognition step. This protein has a weak ATPase activity. This is DNA mismatch repair protein MutS from Prochlorococcus marinus (strain MIT 9303).